A 1042-amino-acid chain; its full sequence is Disintegrin and metalloproteinase domain-containing protein unc-71 (1042 aa).

The N-terminal stretch at 1-23 (MICASKITMLGLLVMCTLGGVLG) is a signal peptide. The Extracellular portion of the chain corresponds to 24–746 (KVDIRQTTAN…NIGTTLETAT (723 aa)). 2 N-linked (GlcNAc...) asparagine glycosylation sites follow: N103 and N155. In terms of domain architecture, Peptidase M12B spans 227–431 (KYVEVALIAD…GNIQCLLNKP (205 aa)). Disulfide bonds link C338-C426, C378-C410, C380-C386, and C496-C516. The Disintegrin domain maps to 437-524 (LRECGNGVVD…DCPPDGHLID (88 aa)). An N-linked (GlcNAc...) asparagine glycan is attached at N538. One can recognise an EGF-like domain in the interval 662 to 699 (SATACPTNNLALLCSGHGHCTTTARCVCFNGWSGVACD). Intrachain disulfides connect C666–C681, C675–C687, and C689–C698. Residue N703 is glycosylated (N-linked (GlcNAc...) asparagine). A helical transmembrane segment spans residues 747-767 (LFAILLGFGVFLLLCLVCLML). At 768-1042 (CYRRRSVVEI…KLEMTNSMHN (275 aa)) the chain is on the cytoplasmic side. 3 disordered regions span residues 779–809 (KPSD…RKRK), 825–850 (DERD…RRNG), and 980–1028 (HDVG…PSLF). Over residues 825-836 (DERDSTSLRSRD) the composition is skewed to basic and acidic residues. Residues 1002 to 1027 (DSPTLVNGASSSSTSNNYNFRQSPSL) show a composition bias toward polar residues.

The protein localises to the cell membrane. Involved in the migration of sex myoblasts (progenitors of egg-laying muscles), Q neuroblasts and BDU interneurons during development. Involved in axon branching and guidance of neurons including GABAergic type D motor neurons. Promotes sex myoblast migration and positioning independently of gonad attraction cues. May act downstream of mig-13 in order to promote the guidance, migration and positioning of Q neuroblasts and their descendants along the anteroposterior body axis. Required for coordinated movements. The protein is Disintegrin and metalloproteinase domain-containing protein unc-71 of Caenorhabditis elegans.